The following is a 242-amino-acid chain: MKTISFNFNQFHQNEEQLKLQRDARISSNSVLELTKVVNGVPTWNSTGRALYAKPVQVWDSTTGNVASFETRFSFSIRQPFPRPHPADGLVFFIAPPNTQTGEGGGYFGIYNPLSPYPFVAVEFDTFRNTWDPQIPHIGIDVNSVISTKTVPFTLDNGGIANVVIKYDASTKILHVVLVFPSLGTIYTIADIVDLKQVLPESVNVGFSAATGDPSGKQRNATETHDILSWSFSASLPGTNEF.

N-linked (GlcNAc...) asparagine glycans are attached at residues N45 and N220.

It belongs to the leguminous lectin family.

In terms of biological role, lectin. This chain is Basic agglutinin (WBAI), found in Psophocarpus tetragonolobus (Winged bean).